Consider the following 194-residue polypeptide: dCTP deaminase (194 aa).

DCTP is bound by residues 110–115, Asp128, 136–138, Tyr171, Lys178, and Gln182; these read RSSLAR and VLE. Glu138 serves as the catalytic Proton donor/acceptor.

The protein belongs to the dCTP deaminase family. In terms of assembly, homotrimer.

It catalyses the reaction dCTP + H2O + H(+) = dUTP + NH4(+). It participates in pyrimidine metabolism; dUMP biosynthesis; dUMP from dCTP (dUTP route): step 1/2. In terms of biological role, catalyzes the deamination of dCTP to dUTP. This chain is dCTP deaminase, found in Pasteurella multocida (strain Pm70).